The following is a 551-amino-acid chain: Intestinal-type alkaline phosphatase 2 (551 aa).

Residues 1-19 form the signal peptide; that stretch reads MQGAWVLLLLGFRLQLSLS. Residue aspartate 61 coordinates Mg(2+). The Zn(2+) site is built by aspartate 61 and serine 111. The active-site Phosphoserine intermediate is serine 111. An intrachain disulfide couples cysteine 140 to cysteine 202. The N-linked (GlcNAc...) asparagine glycan is linked to asparagine 141. Serine 174 serves as a coordination point for Mg(2+). A Ca(2+)-binding site is contributed by glutamate 235. Residue asparagine 241 is glycosylated (N-linked (GlcNAc...) asparagine). Phenylalanine 288, glutamate 289, and aspartate 304 together coordinate Ca(2+). Glutamate 330 lines the Mg(2+) pocket. Positions 335, 339, 376, and 377 each coordinate Zn(2+). Asparagine 426 carries N-linked (GlcNAc...) asparagine glycosylation. Cysteines 485 and 492 form a disulfide. Positions 496-537 are disordered; that stretch reads PPADENRPTTPVQNSTTTTTTTTTTTTTTTTTRVQNSASSLG. The N-linked (GlcNAc...) asparagine glycan is linked to asparagine 509. Over residues 511–527 the composition is skewed to low complexity; it reads TTTTTTTTTTTTTTTTT. A compositionally biased stretch (polar residues) spans 528–537; the sequence is RVQNSASSLG. Asparagine 531 carries the GPI-anchor amidated asparagine lipid modification. Positions 532-551 are cleaved as a propeptide — removed in mature form; the sequence is SASSLGPATAPLAWHYWPRR.

This sequence belongs to the alkaline phosphatase family. In terms of assembly, homodimer. The cofactor is Mg(2+). Requires Zn(2+) as cofactor. Ca(2+) serves as cofactor.

It is found in the cell membrane. The catalysed reaction is a phosphate monoester + H2O = an alcohol + phosphate. Functionally, alkaline phosphatase that can hydrolyze various phosphate compounds. The sequence is that of Intestinal-type alkaline phosphatase 2 from Rattus norvegicus (Rat).